The sequence spans 316 residues: Probable protein-L-isoaspartate O-methyltransferase (316 aa).

Residues 103 to 106, histidine 111, serine 136, 157 to 158, 187 to 188, threonine 263, and glutamine 268 contribute to the S-adenosyl-L-homocysteine site; these read ATIS, EH, and DG. The active site involves serine 106.

The protein belongs to the methyltransferase superfamily. L-isoaspartyl/D-aspartyl protein methyltransferase family.

It localises to the cytoplasm. The protein resides in the cytosol. It catalyses the reaction [protein]-L-isoaspartate + S-adenosyl-L-methionine = [protein]-L-isoaspartate alpha-methyl ester + S-adenosyl-L-homocysteine. In terms of biological role, initiates the repair of damaged proteins by catalyzing methyl esterification of L-isoaspartyl and D-aspartyl residues produced by spontaneous isomerization and racemization of L-aspartyl and L-asparaginyl residues in aging peptides and proteins. The protein is Probable protein-L-isoaspartate O-methyltransferase (pcmA) of Dictyostelium discoideum (Social amoeba).